The primary structure comprises 434 residues: Eukaryotic translation initiation factor 3 subunit E (434 aa).

Residues 219 to 392 (FFNHPKGRDL…GHVVMGTQPL (174 aa)) form the PCI domain.

It belongs to the eIF-3 subunit E family. Component of the eukaryotic translation initiation factor 3 (eIF-3) complex. The eIF-3 complex interacts with pix. Interacts with mxt.

It is found in the cytoplasm. Its function is as follows. Component of the eukaryotic translation initiation factor 3 (eIF-3) complex, which is involved in protein synthesis of a specialized repertoire of mRNAs and, together with other initiation factors, stimulates binding of mRNA and methionyl-tRNAi to the 40S ribosome. The eIF-3 complex specifically targets and initiates translation of a subset of mRNAs involved in cell proliferation. The chain is Eukaryotic translation initiation factor 3 subunit E (eIF3-S6) from Drosophila virilis (Fruit fly).